The primary structure comprises 474 residues: MSEESDGKLIEDSLIQLRCHFTWKLLIEAPEIPDLENRIWEEIQFLDTKYNVGIHNLLAYVKHLKGQNEEALVSLKKAEDLIQKEHANQADIRSLVTWGNFAWVYYHMGRLAEAQTYLDKVENTCKKFANPSRYRMECPEVDCEEGWALAKCGGKNYERAKTCFEKALEGNPENPEFNTGYAITVYRLDKFNTASGRNKAFSLHVLKRAVRLNPDDVYIRVLLALKLQDEGQEAEGEKYIEEALTSISSQAYVFQYAAKFYRRKGSVDKALELLKMALETTPTSAFLHHQMGLCYRAQMIQIKEATNWQPRGQDRETVDRLVQLAICKFEKTIMLKRTFEMAYVDLAETYAEIGHHRKAEEHFQKGLRMKIFEDQLKQEIHYHYGRFQEHHGKSQDKAITHYLKGLKIEKMSHSREKLLNALEKLAKRCIHQNVRVVESVSLLGLIHKLKGEVSDALLCYERALRLAADLNPIF.

TPR repeat units lie at residues 52–85 (VGIHNLLAYVKHLKGQNEEALVSLKKAEDLIQKE), 95–128 (LVTWGNFAWVYYHMGRLAEAQTYLDKVENTCKKF), 141–174 (VDCEEGWALAKCGGKNYERAKTCFEKALEGNPEN), 182–216 (AITVYRLDKFNTASGRNKAFSLHVLKRAVRLNPDD), 218–250 (YIRVLLALKLQDEGQEAEGEKYIEEALTSISSQ), 251–284 (AYVFQYAAKFYRRKGSVDKALELLKMALETTPTS), 305–339 (ATNWQPRGQDRETVDRLVQLAICKFEKTIMLKRTF), 340–373 (EMAYVDLAETYAEIGHHRKAEEHFQKGLRMKIFE), 378–412 (QEIHYHYGRFQEHHGKSQDKAITHYLKGLKIEKMS), and 437–470 (VESVSLLGLIHKLKGEVSDALLCYERALRLAADL).

The protein belongs to the IFIT family.

Functionally, IFIT1B is likely non-functional, lacking the critical antiviral role of IFIT1. Unlike IFIT1, which is essential in the innate immune response as part of an interferon-dependent multiprotein complex, IFIT1B does not prevent the translation of viral RNAs that lack host-specific 2'-O-methylation at their 5' cap. Consequently, it probably cannot inhibit their translation by competing with the host translation machinery. The chain is Protein IFIT1 homolog B from Homo sapiens (Human).